The chain runs to 150 residues: SsrA-binding protein (150 aa).

The interval 129 to 150 is disordered; that stretch reads ETEKQRDWQREKSRIMKGGSKE.

This sequence belongs to the SmpB family.

The protein localises to the cytoplasm. Functionally, required for rescue of stalled ribosomes mediated by trans-translation. Binds to transfer-messenger RNA (tmRNA), required for stable association of tmRNA with ribosomes. tmRNA and SmpB together mimic tRNA shape, replacing the anticodon stem-loop with SmpB. tmRNA is encoded by the ssrA gene; the 2 termini fold to resemble tRNA(Ala) and it encodes a 'tag peptide', a short internal open reading frame. During trans-translation Ala-aminoacylated tmRNA acts like a tRNA, entering the A-site of stalled ribosomes, displacing the stalled mRNA. The ribosome then switches to translate the ORF on the tmRNA; the nascent peptide is terminated with the 'tag peptide' encoded by the tmRNA and targeted for degradation. The ribosome is freed to recommence translation, which seems to be the essential function of trans-translation. The sequence is that of SsrA-binding protein from Cupriavidus pinatubonensis (strain JMP 134 / LMG 1197) (Cupriavidus necator (strain JMP 134)).